A 574-amino-acid polypeptide reads, in one-letter code: Isocitrate dehydrogenase kinase/phosphatase (574 aa).

Residues 315–321 (APGIRGM) and lysine 336 contribute to the ATP site. Residue aspartate 371 is part of the active site.

Belongs to the AceK family.

The protein localises to the cytoplasm. The enzyme catalyses L-seryl-[isocitrate dehydrogenase] + ATP = O-phospho-L-seryl-[isocitrate dehydrogenase] + ADP + H(+). In terms of biological role, bifunctional enzyme which can phosphorylate or dephosphorylate isocitrate dehydrogenase (IDH) on a specific serine residue. This is a regulatory mechanism which enables bacteria to bypass the Krebs cycle via the glyoxylate shunt in response to the source of carbon. When bacteria are grown on glucose, IDH is fully active and unphosphorylated, but when grown on acetate or ethanol, the activity of IDH declines drastically concomitant with its phosphorylation. The protein is Isocitrate dehydrogenase kinase/phosphatase of Escherichia coli (strain SMS-3-5 / SECEC).